Here is a 488-residue protein sequence, read N- to C-terminus: UDP-N-acetylmuramate--L-alanine ligase (488 aa).

127 to 133 provides a ligand contact to ATP; it reads GTHGKTT.

This sequence belongs to the MurCDEF family.

The protein resides in the cytoplasm. The catalysed reaction is UDP-N-acetyl-alpha-D-muramate + L-alanine + ATP = UDP-N-acetyl-alpha-D-muramoyl-L-alanine + ADP + phosphate + H(+). Its pathway is cell wall biogenesis; peptidoglycan biosynthesis. Cell wall formation. This chain is UDP-N-acetylmuramate--L-alanine ligase, found in Shewanella oneidensis (strain ATCC 700550 / JCM 31522 / CIP 106686 / LMG 19005 / NCIMB 14063 / MR-1).